The primary structure comprises 296 residues: Ribosomal RNA small subunit methyltransferase A (296 aa).

The S-adenosyl-L-methionine site is built by Asn30, Leu32, Gly57, Glu78, Asp103, and Asn128.

This sequence belongs to the class I-like SAM-binding methyltransferase superfamily. rRNA adenine N(6)-methyltransferase family. RsmA subfamily.

The protein resides in the cytoplasm. The enzyme catalyses adenosine(1518)/adenosine(1519) in 16S rRNA + 4 S-adenosyl-L-methionine = N(6)-dimethyladenosine(1518)/N(6)-dimethyladenosine(1519) in 16S rRNA + 4 S-adenosyl-L-homocysteine + 4 H(+). Functionally, specifically dimethylates two adjacent adenosines (A1518 and A1519) in the loop of a conserved hairpin near the 3'-end of 16S rRNA in the 30S particle. May play a critical role in biogenesis of 30S subunits. This Staphylococcus epidermidis (strain ATCC 35984 / DSM 28319 / BCRC 17069 / CCUG 31568 / BM 3577 / RP62A) protein is Ribosomal RNA small subunit methyltransferase A.